Here is a 529-residue protein sequence, read N- to C-terminus: GTPase Obg (529 aa).

Positions A2 to I159 constitute an Obg domain. An OBG-type G domain is found at A160–K343. Residues G166 to S173, F191 to I195, D212 to G215, N295 to D298, and S324 to T326 each bind GTP. Mg(2+)-binding residues include S173 and T193. Residues P363–P447 enclose the OCT domain. The segment at G461 to S529 is disordered. Over residues T462–A502 the composition is skewed to basic and acidic residues.

This sequence belongs to the TRAFAC class OBG-HflX-like GTPase superfamily. OBG GTPase family. As to quaternary structure, monomer. It depends on Mg(2+) as a cofactor.

The protein resides in the cytoplasm. An essential GTPase which binds GTP, GDP and possibly (p)ppGpp with moderate affinity, with high nucleotide exchange rates and a fairly low GTP hydrolysis rate. Plays a role in control of the cell cycle, stress response, ribosome biogenesis and in those bacteria that undergo differentiation, in morphogenesis control. In Pseudarthrobacter chlorophenolicus (strain ATCC 700700 / DSM 12829 / CIP 107037 / JCM 12360 / KCTC 9906 / NCIMB 13794 / A6) (Arthrobacter chlorophenolicus), this protein is GTPase Obg.